The chain runs to 376 residues: WW domain-binding protein 4 (376 aa).

The Matrin-type zinc-finger motif lies at 11–42 (KFCDYCKCWIADNRPSVEFHERGKNHKENVAK). The segment covering 94–107 (ITPVTSTIPPTSTS) has biased composition (low complexity). Disordered regions lie at residues 94 to 128 (ITPV…KGRW), 189 to 335 (SRWE…EPKV), and 356 to 376 (FKKR…GDDQ). WW domains are found at residues 122-155 (DPSK…KPEG) and 163-196 (TAVK…KPDD). Residues 189 to 198 (SRWEKPDDFI) show a composition bias toward basic and acidic residues. Over residues 203–215 (DLPSSKVNENSLG) the composition is skewed to polar residues. Basic and acidic residues-rich tracts occupy residues 218–229 (DESKSSDSHSDS) and 243–257 (ETEK…KNKN). A phosphoserine mark is found at Ser-220, Ser-227, and Ser-229. Ser-262 carries the phosphoserine modification. Positions 298–309 (QEIKQEVESHEE) are enriched in basic and acidic residues. Residues 316–326 (STENEYVSTSE) are compositionally biased toward polar residues. Positions 357–375 (KKRRTENGKSRNLRQRGDD) are interaction with SNRNP200. The span at 361 to 376 (TENGKSRNLRQRGDDQ) shows a compositional bias: basic and acidic residues.

As to quaternary structure, component of the spliceosome B complex. Associated with U2 snRNPs. Binds splicing factors SNRPB, SNRPC and SF1. Interacts via the WW domains with the Pro-rich domains of KHDRBS1/SAM68. Interacts via the WW domains with the Pro-rich domains of WBP11. Interacts with SNRNP200.

Its subcellular location is the nucleus. The protein localises to the nucleus speckle. Functionally, involved in pre-mRNA splicing as a component of the spliceosome. May play a role in cross-intron bridging of U1 and U2 snRNPs in the mammalian A complex. The chain is WW domain-binding protein 4 (WBP4) from Homo sapiens (Human).